Consider the following 238-residue polypeptide: Response regulator receiver protein Anae109_2439 (238 aa).

Response regulatory domains lie at 3–117 and 121–228; these read RYLI…AAAR and LVAV…ERLH. 2 positions are modified to 4-aspartylphosphate: aspartate 52 and aspartate 169.

Post-translationally, is diphosphorylated by GchK.

Functionally, member of the two-component regulatory system GcHK/Anae109_2439. Is involved in a signal transduction system responding to oxygen availability. The chain is Response regulator receiver protein Anae109_2439 from Anaeromyxobacter sp. (strain Fw109-5).